The primary structure comprises 732 residues: Translation initiation factor eIF2B subunit epsilon (732 aa).

In terms of domain architecture, W2 spans 559–726 (GEEEEDFGVE…QEADEEDSDE (168 aa)).

Belongs to the eIF-2B gamma/epsilon subunits family. As to quaternary structure, component of the translation initiation factor 2B (eIF2B) complex which is a heterodecamer of two sets of five different subunits: alpha, beta, gamma, delta and epsilon. Subunits alpha, beta and delta comprise a regulatory subcomplex and subunits epsilon and gamma comprise a catalytic subcomplex. Within the complex, the hexameric regulatory complex resides at the center, with the two heterodimeric catalytic subcomplexes bound on opposite sides.

It localises to the cytoplasm. It is found in the cytosol. Its function is as follows. Acts as a component of the translation initiation factor 2B (eIF2B) complex, which catalyzes the exchange of GDP for GTP on the eukaryotic initiation factor 2 (eIF2) complex gamma subunit. Its guanine nucleotide exchange factor activity is repressed when bound to eIF2 complex phosphorylated on the alpha subunit, thereby limiting the amount of methionyl-initiator methionine tRNA available to the ribosome and consequently global translation is repressed. This chain is Translation initiation factor eIF2B subunit epsilon (GCD6), found in Candida albicans (strain SC5314 / ATCC MYA-2876) (Yeast).